The primary structure comprises 255 residues: Syntaxin-6 (255 aa).

Residue serine 2 is modified to N-acetylserine. Phosphoserine is present on serine 2. The required for interaction with VPS51 stretch occupies residues serine 2 to glutamine 168. Over serine 2–glutamine 234 the chain is Cytoplasmic. The stretch at glutamate 41 to asparagine 74 forms a coiled coil. A phosphoserine mark is found at serine 129 and serine 152. Residues glutamine 163 to valine 225 enclose the t-SNARE coiled-coil homology domain. A helical; Anchor for type IV membrane protein membrane pass occupies residues tryptophan 235–leucine 255.

This sequence belongs to the syntaxin family. As to quaternary structure, identified in a complex containing STX6, STX12 and VAMP4. This complex also includes VTI1A. Binds EEA1. Interacts with VPS45A and GOPC. Interacts with MARCHF2; the interaction promotes MARCHF2-mediated ubiquitination and degradation of CFTR. Interacts with MARCHF3. Interacts with BLTP3B (via C-terminal coiled-coil domain). Interacts with BAIAP3; this interaction is increased in the presence of calcium. Interacts with VPS13B.

It localises to the golgi apparatus membrane. It is found in the golgi apparatus. The protein resides in the trans-Golgi network membrane. Its subcellular location is the recycling endosome membrane. SNARE promoting movement of transport vesicles to target membranes. Targets endosomes to the trans-Golgi network, and may therefore function in retrograde trafficking. Together with SNARE STX12, promotes movement of vesicles from endosomes to the cell membrane, and may therefore function in the endocytic recycling pathway. The sequence is that of Syntaxin-6 (Stx6) from Mus musculus (Mouse).